A 214-amino-acid polypeptide reads, in one-letter code: cAMP-activated global transcriptional regulator Vfr (214 aa).

3',5'-cyclic AMP-binding positions include 59 to 60 (RE), 73 to 75 (GEL), 87 to 88 (RS), 132 to 133 (TT), R179, and R185. An HTH crp-type domain is found at 142 to 214 (LDVTGRVART…GKTMVVFGTR (73 aa)). The H-T-H motif DNA-binding region spans 174–193 (RQEIGRIVGCSREMVGRVLK).

Homodimer.

Its function is as follows. Global cAMP-dependent transcriptional regulator that controls virulence gene expression by distinct cAMP-dependent and -independent mechanisms, which allow to fine tune its virulence program in response to specific host cues or environments. Controls the expression of many regulatory targets including type II, type III and type IV secretion systems, flagellar-mediated motility, and quorum sensing systems. Transcriptional control is exerted by binding to a well-characterized consensus site (5'-ANWWTGNGAWNYAGWTCACAT) within target promoters. Directly binds to the toxA upstream region to regulate exotoxin A production, to the lasR gene promoter to activate the las quorum-sensing system or to the exsA promoter to regulate type III secretion system. Autoregulates as well its own expression. This is cAMP-activated global transcriptional regulator Vfr (vfr) from Pseudomonas aeruginosa (strain ATCC 15692 / DSM 22644 / CIP 104116 / JCM 14847 / LMG 12228 / 1C / PRS 101 / PAO1).